The chain runs to 131 residues: UPF0102 protein YraN (131 aa).

The protein belongs to the UPF0102 family.

The sequence is that of UPF0102 protein YraN from Salmonella typhi.